The sequence spans 185 residues: Anaphase-promoting complex subunit 10 (185 aa).

Thr2 carries the post-translational modification N-acetylthreonine. One can recognise a DOC domain in the interval 2-185; that stretch reads TTPNKTPPGA…IDFMMYRSIR (184 aa). Lys169 is modified (N6-acetyllysine).

Belongs to the APC10 family. The mammalian APC/C is composed at least of 14 distinct subunits ANAPC1, ANAPC2, CDC27/APC3, ANAPC4, ANAPC5, CDC16/APC6, ANAPC7, CDC23/APC8, ANAPC10, ANAPC11, CDC26/APC12, ANAPC13, ANAPC15 and ANAPC16 that assemble into a complex of at least 19 chains with a combined molecular mass of around 1.2 MDa; APC/C interacts with FZR1 and FBXO5. The C-terminus of APC10 binds to CDC27/APC3. Interacts with PIWIL1; interaction only takes place when PIWIL1 binds piRNA. Interacts with FBXO43; the interaction is direct.

Its pathway is protein modification; protein ubiquitination. Component of the anaphase promoting complex/cyclosome (APC/C), a cell cycle-regulated E3 ubiquitin ligase that controls progression through mitosis and the G1 phase of the cell cycle. The APC/C complex acts by mediating ubiquitination and subsequent degradation of target proteins: it mainly mediates the formation of 'Lys-11'-linked polyubiquitin chains and, to a lower extent, the formation of 'Lys-48'- and 'Lys-63'-linked polyubiquitin chains. The APC/C complex catalyzes assembly of branched 'Lys-11'-/'Lys-48'-linked branched ubiquitin chains on target proteins. The sequence is that of Anaphase-promoting complex subunit 10 (ANAPC10) from Homo sapiens (Human).